The chain runs to 260 residues: Deoxycytidine kinase (260 aa).

Phosphoserine; by CK1 is present on residues serine 11 and serine 15. An ATP-binding site is contributed by 28–36 (GNIAAGKST). Glutamate 53 provides a ligand contact to substrate. The residue at position 72 (threonine 72) is a Phosphothreonine; by CK1. Residue serine 74 is modified to Phosphoserine. Substrate is bound by residues tyrosine 86 and glutamine 97. Glutamate 127 serves as the catalytic Proton acceptor. Residues arginine 128 and aspartate 133 each coordinate substrate. 188–192 (RIYLR) provides a ligand contact to ATP. A substrate-binding site is contributed by glutamate 197. Position 240 to 242 (240 to 242 (EDF)) interacts with ATP.

This sequence belongs to the DCK/DGK family. In terms of assembly, homodimer. In terms of processing, phosphorylated and activated in vitro upon phosphorylation at Ser-74 by CSNK1D/CK1.

It is found in the nucleus. It catalyses the reaction 2'-deoxycytidine + a ribonucleoside 5'-triphosphate = dCMP + a ribonucleoside 5'-diphosphate + H(+). The catalysed reaction is 2'-deoxyadenosine + ATP = dAMP + ADP + H(+). The enzyme catalyses 2'-deoxyguanosine + ATP = dGMP + ADP + H(+). Its function is as follows. Phosphorylates the deoxyribonucleosides deoxycytidine, deoxyguanosine and deoxyadenosine. Has broad substrate specificity, and does not display selectivity based on the chirality of the substrate. It is also an essential enzyme for the phosphorylation of numerous nucleoside analogs widely employed as antiviral and chemotherapeutic agents. This is Deoxycytidine kinase (DCK) from Homo sapiens (Human).